The primary structure comprises 165 residues: Ubiquitin-fold modifier-conjugating enzyme 1 (165 aa).

The active-site Glycyl thioester intermediate is the C116.

This sequence belongs to the ubiquitin-conjugating enzyme family. UFC1 subfamily.

Functionally, E2-like enzyme which forms an intermediate with UFM1 via a thioester linkage. This Drosophila virilis (Fruit fly) protein is Ubiquitin-fold modifier-conjugating enzyme 1.